The sequence spans 246 residues: Probable 2-phosphosulfolactate phosphatase (246 aa).

This sequence belongs to the ComB family. The cofactor is Mg(2+).

It catalyses the reaction (2R)-O-phospho-3-sulfolactate + H2O = (2R)-3-sulfolactate + phosphate. The chain is Probable 2-phosphosulfolactate phosphatase from Nostoc punctiforme (strain ATCC 29133 / PCC 73102).